The chain runs to 428 residues: MDILQDLESRGLIHQTTDRERLEKHLQNNQVTLYCGFDPTADSLHIGHLVPLTMLKRFQQAGHKPIALVGGGTGMIGDPSGRSSERSLNAPEVVHGFTSKLQQQIAKLVDMESNASENTVVARNNHDWLGNMTIIDFLRDAGKHFGINYMLAKESVSARIEQGITFTEFSYMILQSLDYLKLYEEENCTLQIGGSDQWGNITAGMELIRRSRENLDENIEVFGLTVPLITKADGTKFGKTAGNAIWLDASKTSPYEFYQFWFNTDDRDVIRFIRYFTFLSVEEITELEKEVETQPEKRVAQKRLAEEMTKTVHDEAALEQAKRITNALFSGDIKQLNVEEVEQAFKDVPNHIITREPVGLIDLLVDAKISSSKRQAREDVKNGAIYINGERVQDMNYHVEEKDHLGNKFTVVRRGKKKYFLIQVESIS.

Y34 contacts L-tyrosine. A 'HIGH' region motif is present at residues 39–48; the sequence is PTADSLHIGH. L-tyrosine is bound by residues Y171 and Q175. A 'KMSKS' region motif is present at residues 236 to 240; sequence KFGKT. K239 lines the ATP pocket. The S4 RNA-binding domain maps to 358 to 424; sequence VGLIDLLVDA…GKKKYFLIQV (67 aa).

It belongs to the class-I aminoacyl-tRNA synthetase family. TyrS type 1 subfamily. In terms of assembly, homodimer.

It is found in the cytoplasm. The catalysed reaction is tRNA(Tyr) + L-tyrosine + ATP = L-tyrosyl-tRNA(Tyr) + AMP + diphosphate + H(+). In terms of biological role, catalyzes the attachment of tyrosine to tRNA(Tyr) in a two-step reaction: tyrosine is first activated by ATP to form Tyr-AMP and then transferred to the acceptor end of tRNA(Tyr). The polypeptide is Tyrosine--tRNA ligase (Oceanobacillus iheyensis (strain DSM 14371 / CIP 107618 / JCM 11309 / KCTC 3954 / HTE831)).